The primary structure comprises 904 residues: Protein translocase subunit SecA (904 aa).

ATP contacts are provided by residues Gln89, 107–111 (GEGKT), and Asp502. The disordered stretch occupies residues 872-892 (VESDPTTWGEPSRNDPCPCGS). Residues Cys888, Cys890, Cys899, and His900 each coordinate Zn(2+).

Belongs to the SecA family. In terms of assembly, part of the essential protein translocation apparatus which comprises SecA, SecYEG and auxiliary proteins SecDF-YajC and YidC. Homodimer. The cofactor is Zn(2+).

The protein resides in the cell inner membrane. Its subcellular location is the cytoplasm. It carries out the reaction ATP + H2O + cellular proteinSide 1 = ADP + phosphate + cellular proteinSide 2.. In terms of biological role, part of the Sec protein translocase complex. Interacts with the SecYEG preprotein conducting channel. Has a central role in coupling the hydrolysis of ATP to the transfer of proteins into and across the cell membrane, serving both as a receptor for the preprotein-SecB complex and as an ATP-driven molecular motor driving the stepwise translocation of polypeptide chains across the membrane. In Rhodobacter capsulatus (Rhodopseudomonas capsulata), this protein is Protein translocase subunit SecA.